A 744-amino-acid chain; its full sequence is Protein zyg-11 homolog B (744 aa).

LRR repeat units lie at residues 185-208, 216-236, and 237-261; these read LPRL…LACK, MHHL…VREL, and KHLN…LLEQ.

It belongs to the zyg-11 family. In terms of assembly, interacts with ELOC/Elongin C. Part of an E3 ubiquitin ligase complex including ZYG11B, CUL2 and Elongin BC.

Serves as substrate adapter subunit in the E3 ubiquitin ligase complex ZYG11B-CUL2-Elongin BC. Acts redudantly with ZER1 to target substrates bearing N-terminal glycine degrons for proteasomal degradation. Involved in the clearance of proteolytic fragments generated by caspase cleavage during apoptosis since N-terminal glycine degrons are strongly enriched at caspase cleavage sites. Also important in the quality control of protein N-myristoylation in which N-terminal glycine degrons are conditionally exposed after a failure of N-myristoylation. This is Protein zyg-11 homolog B from Mus musculus (Mouse).